The sequence spans 125 residues: Large ribosomal subunit protein bL12 (125 aa).

It belongs to the bacterial ribosomal protein bL12 family. Homodimer. Part of the ribosomal stalk of the 50S ribosomal subunit. Forms a multimeric L10(L12)X complex, where L10 forms an elongated spine to which 2 to 4 L12 dimers bind in a sequential fashion. Binds GTP-bound translation factors.

In terms of biological role, forms part of the ribosomal stalk which helps the ribosome interact with GTP-bound translation factors. Is thus essential for accurate translation. In Chlorobium phaeobacteroides (strain DSM 266 / SMG 266 / 2430), this protein is Large ribosomal subunit protein bL12.